A 590-amino-acid polypeptide reads, in one-letter code: Aspartate--tRNA(Asp/Asn) ligase (590 aa).

Glutamate 175 provides a ligand contact to L-aspartate. The aspartate stretch occupies residues 199–202; it reads QQYK. 2 residues coordinate L-aspartate: arginine 221 and histidine 450. An ATP-binding site is contributed by 221–223; that stretch reads RDE. Residue glutamate 484 participates in ATP binding. An L-aspartate-binding site is contributed by arginine 491. 536-539 serves as a coordination point for ATP; it reads GVDR.

The protein belongs to the class-II aminoacyl-tRNA synthetase family. Type 1 subfamily. In terms of assembly, homodimer.

It is found in the cytoplasm. It carries out the reaction tRNA(Asx) + L-aspartate + ATP = L-aspartyl-tRNA(Asx) + AMP + diphosphate. Aspartyl-tRNA synthetase with relaxed tRNA specificity since it is able to aspartylate not only its cognate tRNA(Asp) but also tRNA(Asn). Reaction proceeds in two steps: L-aspartate is first activated by ATP to form Asp-AMP and then transferred to the acceptor end of tRNA(Asp/Asn). The sequence is that of Aspartate--tRNA(Asp/Asn) ligase from Bradyrhizobium diazoefficiens (strain JCM 10833 / BCRC 13528 / IAM 13628 / NBRC 14792 / USDA 110).